Here is a 640-residue protein sequence, read N- to C-terminus: ETV5-related protein Ets96B (640 aa).

The tract at residues 315–375 (HADSTTTAAQ…HHGHQQAEQQ (61 aa)) is disordered. A coiled-coil region spans residues 321 to 356 (TAAQQQQQQQEQQQQQQQQQQQQQHQQQLQQAAALH). Residues 322–355 (AAQQQQQQQEQQQQQQQQQQQQQHQQQLQQAAAL) show a composition bias toward low complexity. Residues 356 to 369 (HPHHHHSHHGHHGH) show a composition bias toward basic residues. The ETS DNA-binding region spans 498 to 579 (LQLWQFLVAL…NGERYVYRFV (82 aa)). Residues 609–624 (LAKTPPTSGDSQTQSP) are compositionally biased toward polar residues. A disordered region spans residues 609–628 (LAKTPPTSGDSQTQSPRVAK).

The protein belongs to the ETS family. As to expression, in the adult brain, expressed almost exclusively in dopaminergic neurons.

It is found in the nucleus. In terms of biological role, required in dopaminergic neurons to regulate expression of genes involved in dopamine signaling. Decreases expression of the dopamine transporter DAT and increases expression of the dopamine transporter Vmat and the tyrosine 3-monooxygenase ple which is involved in dopamine biosynthesis. Also involved in negatively regulating the expression of a group of endoplasmic reticulum proteins, the molecular chaperone Calr and the protein disulfide isomerases CaBP1 and ERp60. The polypeptide is ETV5-related protein Ets96B (Drosophila melanogaster (Fruit fly)).